We begin with the raw amino-acid sequence, 438 residues long: Glutamyl-tRNA reductase (438 aa).

Substrate is bound by residues 49–52 (TCNR), S109, 114–116 (EQQ), and Q120. C50 acts as the Nucleophile in catalysis. 191-196 (GAGAMA) contacts NADP(+).

It belongs to the glutamyl-tRNA reductase family. Homodimer.

It catalyses the reaction (S)-4-amino-5-oxopentanoate + tRNA(Glu) + NADP(+) = L-glutamyl-tRNA(Glu) + NADPH + H(+). It participates in porphyrin-containing compound metabolism; protoporphyrin-IX biosynthesis; 5-aminolevulinate from L-glutamyl-tRNA(Glu): step 1/2. In terms of biological role, catalyzes the NADPH-dependent reduction of glutamyl-tRNA(Glu) to glutamate 1-semialdehyde (GSA). The chain is Glutamyl-tRNA reductase from Corynebacterium diphtheriae (strain ATCC 700971 / NCTC 13129 / Biotype gravis).